The following is a 302-amino-acid chain: Oxygen-dependent coproporphyrinogen-III oxidase (302 aa).

Ser-94 is a binding site for substrate. Residues His-98 and His-108 each contribute to the a divalent metal cation site. Catalysis depends on His-108, which acts as the Proton donor. 110–112 (NVR) serves as a coordination point for substrate. His-147 and His-177 together coordinate a divalent metal cation. The tract at residues 242 to 277 (YVEFNLVYDRGTLFGLQTGGRTESILMSMPPLVRWQ) is important for dimerization. 260–262 (GGR) is a substrate binding site.

It belongs to the aerobic coproporphyrinogen-III oxidase family. In terms of assembly, homodimer. It depends on a divalent metal cation as a cofactor.

It is found in the cytoplasm. The catalysed reaction is coproporphyrinogen III + O2 + 2 H(+) = protoporphyrinogen IX + 2 CO2 + 2 H2O. The protein operates within porphyrin-containing compound metabolism; protoporphyrin-IX biosynthesis; protoporphyrinogen-IX from coproporphyrinogen-III (O2 route): step 1/1. In terms of biological role, involved in the heme biosynthesis. Catalyzes the aerobic oxidative decarboxylation of propionate groups of rings A and B of coproporphyrinogen-III to yield the vinyl groups in protoporphyrinogen-IX. The chain is Oxygen-dependent coproporphyrinogen-III oxidase from Shewanella sp. (strain ANA-3).